Reading from the N-terminus, the 311-residue chain is tRNA-cytidine(32) 2-sulfurtransferase (311 aa).

The PP-loop motif motif lies at 47 to 52 (SGGKDS). 3 residues coordinate [4Fe-4S] cluster: C122, C125, and C213.

Belongs to the TtcA family. Homodimer. It depends on Mg(2+) as a cofactor. Requires [4Fe-4S] cluster as cofactor.

The protein resides in the cytoplasm. It carries out the reaction cytidine(32) in tRNA + S-sulfanyl-L-cysteinyl-[cysteine desulfurase] + AH2 + ATP = 2-thiocytidine(32) in tRNA + L-cysteinyl-[cysteine desulfurase] + A + AMP + diphosphate + H(+). Its pathway is tRNA modification. Its function is as follows. Catalyzes the ATP-dependent 2-thiolation of cytidine in position 32 of tRNA, to form 2-thiocytidine (s(2)C32). The sulfur atoms are provided by the cysteine/cysteine desulfurase (IscS) system. This is tRNA-cytidine(32) 2-sulfurtransferase from Salmonella typhimurium (strain LT2 / SGSC1412 / ATCC 700720).